Reading from the N-terminus, the 428-residue chain is Histidinol dehydrogenase (428 aa).

Residues Tyr-127, Gln-185, and Asn-208 each contribute to the NAD(+) site. The substrate site is built by Ser-232, Gln-254, and His-257. Residues Gln-254 and His-257 each contribute to the Zn(2+) site. Catalysis depends on proton acceptor residues Glu-321 and His-322. Residues His-322, Asp-355, Glu-409, and His-414 each contribute to the substrate site. Asp-355 contacts Zn(2+). His-414 contacts Zn(2+).

This sequence belongs to the histidinol dehydrogenase family. It depends on Zn(2+) as a cofactor.

The enzyme catalyses L-histidinol + 2 NAD(+) + H2O = L-histidine + 2 NADH + 3 H(+). It functions in the pathway amino-acid biosynthesis; L-histidine biosynthesis; L-histidine from 5-phospho-alpha-D-ribose 1-diphosphate: step 9/9. Catalyzes the sequential NAD-dependent oxidations of L-histidinol to L-histidinaldehyde and then to L-histidine. The chain is Histidinol dehydrogenase from Pasteurella multocida (strain Pm70).